Consider the following 669-residue polypeptide: Methionine--tRNA ligase (669 aa).

The 'HIGH' region signature appears at 14-24 (YYPSGKLHIGN). His-161 provides a ligand contact to Zn(2+). Positions 309–313 (KMSKS) match the 'KMSKS' region motif. Residue Lys-312 coordinates ATP. In terms of domain architecture, tRNA-binding spans 566-669 (DFDKVELKVA…KEMPNGAGIA (104 aa)).

It belongs to the class-I aminoacyl-tRNA synthetase family. MetG type 2B subfamily. Homodimer.

The protein resides in the cytoplasm. It carries out the reaction tRNA(Met) + L-methionine + ATP = L-methionyl-tRNA(Met) + AMP + diphosphate. Functionally, is required not only for elongation of protein synthesis but also for the initiation of all mRNA translation through initiator tRNA(fMet) aminoacylation. This chain is Methionine--tRNA ligase, found in Enterococcus faecalis (strain ATCC 700802 / V583).